The chain runs to 666 residues: Non-receptor tyrosine-protein kinase TNK1 (666 aa).

A phosphoserine mark is found at S60 and S96. One can recognise a Protein kinase domain in the interval 116–377 (VCRGELLGSG…PSFSHLEGLL (262 aa)). ATP-binding positions include 122 to 130 (LGSGCFGVV) and K148. The Proton acceptor role is filled by D245. 2 positions are modified to phosphoserine: S255 and S411. One can recognise an SH3 domain in the interval 380–445 (AGPSEACCVR…PASAVTLADA (66 aa)). A disordered region spans residues 446 to 493 (GGLPATRPVHRGTPARGDQHPGSIDGDRKKANLWDAPPARGQRRNMPL). S502 is modified (phosphoserine). The interval 506–579 (VLSLGPRPTG…MGMPGARKAA (74 aa)) is disordered. Position 514 is a phosphothreonine (T514). Position 519 is a phosphoserine (S519). Pro residues predominate over residues 531–541 (QGPPGLPPRPP). A compositionally biased stretch (low complexity) spans 542–552 (LSSSSPQPSQP). S582 is subject to Phosphoserine.

This sequence belongs to the protein kinase superfamily. Tyr protein kinase family. As to quaternary structure, interacts with the SH3 domain of PLCG1 via its Pro-rich domain. In terms of processing, autophosphorylated on tyrosine residues. As to expression, expressed in all umbilical cord blood, bone marrow and adult blood cell sub-populations and in several leukemia cell lines. Highly expressed in fetal blood, brain, lung, liver and kidney. Detected at lower levels in adult prostate, testis, ovary, small intestine and colon. Not expressed in adult lung, liver, kidney or brain.

The protein resides in the cytoplasm. The protein localises to the membrane. It carries out the reaction L-tyrosyl-[protein] + ATP = O-phospho-L-tyrosyl-[protein] + ADP + H(+). Its function is as follows. Involved in negative regulation of cell growth. Has tumor suppressor properties. Plays a negative regulatory role in the Ras-MAPK pathway. May function in signaling pathways utilized broadly during fetal development and more selectively in adult tissues and in cells of the lymphohematopoietic system. Could specifically be involved in phospholipid signal transduction. This Homo sapiens (Human) protein is Non-receptor tyrosine-protein kinase TNK1.